The sequence spans 269 residues: Putative hydro-lyase Swoo_1731 (269 aa).

It belongs to the D-glutamate cyclase family.

This chain is Putative hydro-lyase Swoo_1731, found in Shewanella woodyi (strain ATCC 51908 / MS32).